Consider the following 548-residue polypeptide: Chaperonin GroEL (548 aa).

Residues 29–32 (TMGP), Lys-50, 86–90 (DGTTT), Gly-414, 478–480 (NAA), and Asp-494 contribute to the ATP site.

It belongs to the chaperonin (HSP60) family. In terms of assembly, forms a cylinder of 14 subunits composed of two heptameric rings stacked back-to-back. Interacts with the co-chaperonin GroES.

Its subcellular location is the cytoplasm. The enzyme catalyses ATP + H2O + a folded polypeptide = ADP + phosphate + an unfolded polypeptide.. In terms of biological role, together with its co-chaperonin GroES, plays an essential role in assisting protein folding. The GroEL-GroES system forms a nano-cage that allows encapsulation of the non-native substrate proteins and provides a physical environment optimized to promote and accelerate protein folding. Functionally, may play a protective role against the defense mechanisms generated by the infected macrophages. This chain is Chaperonin GroEL, found in Legionella pneumophila subsp. pneumophila (strain Philadelphia 1 / ATCC 33152 / DSM 7513).